The following is a 103-amino-acid chain: Small ribosomal subunit protein bS18c (103 aa).

The protein belongs to the bacterial ribosomal protein bS18 family. In terms of assembly, part of the 30S ribosomal subunit.

The protein localises to the plastid. It is found in the chloroplast. The polypeptide is Small ribosomal subunit protein bS18c (rps18) (Chlorella vulgaris (Green alga)).